A 93-amino-acid polypeptide reads, in one-letter code: Small ribosomal subunit protein uS19 (93 aa).

Belongs to the universal ribosomal protein uS19 family.

In terms of biological role, protein S19 forms a complex with S13 that binds strongly to the 16S ribosomal RNA. The protein is Small ribosomal subunit protein uS19 of Clavibacter michiganensis subsp. michiganensis (strain NCPPB 382).